The chain runs to 438 residues: Enolase 1 (438 aa).

2 residues coordinate substrate: His-160 and Glu-169. Glu-212 serves as the catalytic Proton donor. 3 residues coordinate Mg(2+): Asp-247, Glu-296, and Asp-321. Substrate contacts are provided by Glu-296 and Asp-321. The Proton acceptor role is filled by Lys-346. Substrate contacts are provided by residues 373-376 (SHRS) and Lys-397.

It belongs to the enolase family. Homodimer. Mg(2+) is required as a cofactor.

It is found in the cytoplasm. It carries out the reaction (2R)-2-phosphoglycerate = phosphoenolpyruvate + H2O. The protein operates within carbohydrate degradation; glycolysis; pyruvate from D-glyceraldehyde 3-phosphate: step 4/5. The sequence is that of Enolase 1 (ENO1) from Candida glabrata (strain ATCC 2001 / BCRC 20586 / JCM 3761 / NBRC 0622 / NRRL Y-65 / CBS 138) (Yeast).